We begin with the raw amino-acid sequence, 514 residues long: Putative exoglucanase type C (514 aa).

Residues 1-17 form the signal peptide; sequence MYRIVATASALIAAARA. Residues 18–439 form a catalytic region; the sequence is QQVCSLNTET…RDVPNSKVSF (422 aa). Glu-229 serves as the catalytic Nucleophile. Glu-234 acts as the Proton donor in catalysis. The N-linked (GlcNAc...) asparagine glycan is linked to Asn-287. Polar residues predominate over residues 408 to 424; it reads STKVGSQRGSCATTSGK. Disordered stretches follow at residues 408 to 433 and 448 to 485; these read STKVGSQRGSCATTSGKPSDLERDVP and GSTYKSDGTTPNPPASSSTTGSSTPTNPPAGSVDQWGQ. The linker stretch occupies residues 440 to 482; sequence SNIKFGPIGSTYKSDGTTPNPPASSSTTGSSTPTNPPAGSVDQ. A compositionally biased stretch (low complexity) spans 462-479; that stretch reads ASSSTTGSSTPTNPPAGS. Residues 478 to 514 enclose the CBM1 domain; that stretch reads GSVDQWGQCGGQNYSGPTTCKSPFTCKKINDFYSQCQ. Disulfide bonds link Cys-486–Cys-503 and Cys-497–Cys-513. N-linked (GlcNAc...) asparagine glycosylation is present at Asn-490.

It belongs to the glycosyl hydrolase 7 (cellulase C) family.

It catalyses the reaction Hydrolysis of (1-&gt;4)-beta-D-glucosidic linkages in cellulose and cellotetraose, releasing cellobiose from the non-reducing ends of the chains.. The sequence is that of Putative exoglucanase type C from Fusarium oxysporum (Fusarium vascular wilt).